A 419-amino-acid polypeptide reads, in one-letter code: ADIPOR-like receptor IZH3 (419 aa).

The disordered stretch occupies residues 1–65 (MSHPNTHMPR…GEAGGGRSVL (65 aa)). At 1-147 (MSHPNTHMPR…LNAYGWHNET (147 aa)) the chain is on the lumenal side. Residue N145 is glycosylated (N-linked (GlcNAc...) asparagine). Residues 148–168 (INIWSHLVGAAVLAYLLCWGW) form a helical membrane-spanning segment. Over 169–184 (PRSDVYRAAQVPRLAK) the chain is Cytoplasmic. Residues 185–205 (WAIGAFLACGVKCMASSVAWH) form a helical membrane-spanning segment. The Lumenal portion of the chain corresponds to 206-225 (TFNGTCHLKLRSRFVCVDYT). N208 carries N-linked (GlcNAc...) asparagine glycosylation. A helical transmembrane segment spans residues 226–246 (GITLLVTASVVTTVAVTLYGL). Over 247–249 (SRP) the chain is Cytoplasmic. Residues 250 to 270 (LMYAYMVASIGLGTAAGVMNW) form a helical membrane-spanning segment. The Lumenal segment spans residues 271–283 (SPHFDRPEARPLR). The helical transmembrane segment at 284-304 (IAVYVGLAALGLVSFVHVWMQ) threads the bilayer. The Cytoplasmic portion of the chain corresponds to 305 to 311 (VRWASAH). Residues 312–332 (LMAPLVYKSLVWYGIGVVFYA) traverse the membrane as a helical segment. Topologically, residues 333–377 (TLVPERWRSDVTLDCCSGPVHEAACRQFRDLPPVARKDRQFWSLW) are lumenal. The chain crosses the membrane as a helical span at residues 378–398 (WVDYFCHSHFLWHVFVVLGVV). The Cytoplasmic segment spans residues 399–419 (GHYRAVLQMSRIVWLDAGRAF).

The protein belongs to the ADIPOR family.

Its subcellular location is the endoplasmic reticulum membrane. Functionally, ADIPOR-like receptor involved in zinc metabolism either by altering membrane sterol content or by directly altering cellular zinc levels. This Eremothecium gossypii (strain ATCC 10895 / CBS 109.51 / FGSC 9923 / NRRL Y-1056) (Yeast) protein is ADIPOR-like receptor IZH3 (IZH3).